Reading from the N-terminus, the 127-residue chain is MARIAGVDLPRDKRVEIALTYLYGVGLSRSQEVLSATGVNPDTRVKDLSDEDVAALRTYIETNYQIEGDLRRWEAMNIKRLADIGTYRGRRHRLGLPVRGQRTRTNARTRRGRRVTVAGKKKAPSKK.

Positions 97-127 (PVRGQRTRTNARTRRGRRVTVAGKKKAPSKK) are disordered. Residues 101–127 (QRTRTNARTRRGRRVTVAGKKKAPSKK) show a composition bias toward basic residues.

It belongs to the universal ribosomal protein uS13 family. In terms of assembly, part of the 30S ribosomal subunit. Forms a loose heterodimer with protein S19. Forms two bridges to the 50S subunit in the 70S ribosome.

Located at the top of the head of the 30S subunit, it contacts several helices of the 16S rRNA. In the 70S ribosome it contacts the 23S rRNA (bridge B1a) and protein L5 of the 50S subunit (bridge B1b), connecting the 2 subunits; these bridges are implicated in subunit movement. Contacts the tRNAs in the A and P-sites. The protein is Small ribosomal subunit protein uS13 of Microcystis aeruginosa (strain NIES-843 / IAM M-2473).